Consider the following 307-residue polypeptide: MSLENDAAAPPPPPLPPPPPPQPPSLARSESSKKKLYQALAEGRTAVEGDYEEASIIIGQRESSFSKDLQWLLFNNYVPSLIQDGPQCGLVALWMAAHLLQPPKTLLLETLVQTAKDNGYTEQGEMFSASDMAKLAEDVCGCRVQRLSGGMLGENTAVILKHLINRQPILIPYDEDFNHEPCLRNGHKAHWAVASGILLGLREGCVNYKHFPPDITLPWLRLAQSEASVSWPIDDIEEVFVLAKQGKSLRYQLWEFESVAQSNKQLKEMDPQRASDGTRYVLPPGGVQDGLAGQVLLLHTNTEQTKN.

The interval 1–34 is disordered; it reads MSLENDAAAPPPPPLPPPPPPQPPSLARSESSKK. Residues 9 to 24 show a composition bias toward pro residues; the sequence is APPPPPLPPPPPPQPP. A peptidase C39-like region spans residues 80–200; that stretch reads SLIQDGPQCG…WAVASGILLG (121 aa). Cys88 is an active-site residue.

Belongs to the ACTMAP family.

Its subcellular location is the cytoplasm. It catalyses the reaction N-terminal N(alpha)-acetyl-L-methionyl-L-aspartyl-[protein] + H2O = N-terminal L-aspartyl-[protein] + N-acetyl-L-methionine. The catalysed reaction is N-terminal N(alpha)-acetyl-L-methionyl-L-glutamyl-[protein] + H2O = N-terminal L-glutamyl-[protein] + N-acetyl-L-methionine. It carries out the reaction N-terminal N(alpha)-acetyl-L-cysteinyl-L-aspartyl-[protein] + H2O = N-terminal L-aspartyl-[protein] + N-acetyl-L-cysteine. The enzyme catalyses N-terminal N(alpha)-acetyl-L-cysteinyl-L-glutamyl-[protein] + H2O = N-terminal L-glutamyl-[protein] + N-acetyl-L-cysteine. Functionally, actin maturation protease that specifically mediates the cleavage of immature acetylated N-terminal actin, thereby contributing to actin maturation. Cleaves N-terminal acetylated methionine of immature cytoplasmic actin after translation. Cleaves N-terminal acetylated cysteine of muscle actin after canonical removal of N-terminal methionine. The polypeptide is Actin maturation protease (Danio rerio (Zebrafish)).